The primary structure comprises 259 residues: Deoxyribose-phosphate aldolase (259 aa).

D102 serves as the catalytic Proton donor/acceptor. Residue K167 is the Schiff-base intermediate with acetaldehyde of the active site. K201 functions as the Proton donor/acceptor in the catalytic mechanism.

This sequence belongs to the DeoC/FbaB aldolase family. DeoC type 2 subfamily.

The protein localises to the cytoplasm. The enzyme catalyses 2-deoxy-D-ribose 5-phosphate = D-glyceraldehyde 3-phosphate + acetaldehyde. It participates in carbohydrate degradation; 2-deoxy-D-ribose 1-phosphate degradation; D-glyceraldehyde 3-phosphate and acetaldehyde from 2-deoxy-alpha-D-ribose 1-phosphate: step 2/2. In terms of biological role, catalyzes a reversible aldol reaction between acetaldehyde and D-glyceraldehyde 3-phosphate to generate 2-deoxy-D-ribose 5-phosphate. The sequence is that of Deoxyribose-phosphate aldolase from Cronobacter sakazakii (strain ATCC BAA-894) (Enterobacter sakazakii).